The following is an 81-amino-acid chain: Sulfur carrier protein TusA (81 aa).

The Cysteine persulfide intermediate role is filled by Cys-19.

Belongs to the sulfur carrier protein TusA family.

The protein resides in the cytoplasm. In terms of biological role, sulfur carrier protein which probably makes part of a sulfur-relay system. The protein is Sulfur carrier protein TusA of Aeromonas salmonicida (strain A449).